Here is a 516-residue protein sequence, read N- to C-terminus: Bifunctional pantoate ligase/cytidylate kinase (516 aa).

Positions 1 to 279 are pantoate--beta-alanine ligase; it reads MVRKIFQTNA…CGSTRLIDHT (279 aa). An ATP-binding site is contributed by 29–36; sequence MGGLHPGH. Histidine 36 functions as the Proton donor in the catalytic mechanism. Glutamine 64 lines the (R)-pantoate pocket. Glutamine 64 lines the beta-alanine pocket. 153 to 156 lines the ATP pocket; the sequence is GEKD. Glutamine 159 is a (R)-pantoate binding site. Residue 190–193 participates in ATP binding; that stretch reads YSSR. Residues 280-516 are cytidylate kinase; it reads FLMHRKPIIA…PEEVWPTPNS (237 aa).

In the N-terminal section; belongs to the pantothenate synthetase family. It in the C-terminal section; belongs to the cytidylate kinase family. Type 1 subfamily.

It localises to the cytoplasm. It catalyses the reaction (R)-pantoate + beta-alanine + ATP = (R)-pantothenate + AMP + diphosphate + H(+). It carries out the reaction CMP + ATP = CDP + ADP. The enzyme catalyses dCMP + ATP = dCDP + ADP. It participates in cofactor biosynthesis; (R)-pantothenate biosynthesis; (R)-pantothenate from (R)-pantoate and beta-alanine: step 1/1. Catalyzes the condensation of pantoate with beta-alanine in an ATP-dependent reaction via a pantoyl-adenylate intermediate. Its function is as follows. Catalyzes the transfer of a phosphate group from ATP to either CMP or dCMP to form CDP or dCDP and ADP, respectively. The sequence is that of Bifunctional pantoate ligase/cytidylate kinase from Prochlorococcus marinus (strain NATL2A).